A 212-amino-acid chain; its full sequence is Troponin I, cardiac muscle (212 aa).

Over residues 1-11 the composition is skewed to polar residues; it reads MADRSGGSTAG. A disordered region spans residues 1–45; sequence MADRSGGSTAGDTVPAPPPVRRRSSANYRAYATEPHAKKKSKISA. The residue at position 2 (Ala-2) is an N-acetylalanine. The residue at position 5 (Ser-5) is a Phosphoserine. Phosphoserine; by PKA and PKD/PRKD1 occurs at positions 24 and 25. Position 28 is a phosphotyrosine (Tyr-28). Residue Thr-33 is modified to Phosphothreonine; by STK4/MST1. The tract at residues 34–81 is involved in binding TNC; it reads EPHAKKKSKISASRKLQLKTLMLQIAKQELEREAEERRGEKGRALSTR. A phosphoserine; by PKC/PRKCE mark is found at Ser-44 and Ser-46. Thr-53 carries the post-translational modification Phosphothreonine; by STK4/MST1. The residue at position 79 (Ser-79) is a Phosphoserine. Position 80 is a phosphothreonine (Thr-80). An involved in binding TNC and actin region spans residues 131–151; sequence NQKIFDLRGKFKRPTLRRVRI. Residue Thr-145 is modified to Phosphothreonine; by STK4/MST1. A Phosphoserine; by PAK3 modification is found at Ser-152. Phosphothreonine is present on Thr-183. Ser-201 is subject to Phosphoserine.

Belongs to the troponin I family. In terms of assembly, interacts with TRIM63. Binds to actin and tropomyosin. Interacts with STK4/MST1. Phosphorylated at Ser-24 and Ser-25 by PRKD1; phosphorylation reduces myofilament calcium sensitivity. Phosphorylated preferentially at Thr-33. Phosphorylation by STK4/MST1 alters its binding affinity to TNNC1 (cardiac Tn-C) and TNNT2 (cardiac Tn-T). Phosphorylated at Ser-44 and Ser-46 by PRKCE; phosphorylation increases myocardium contractile dysfunction.

Functionally, troponin I is the inhibitory subunit of troponin, the thin filament regulatory complex which confers calcium-sensitivity to striated muscle actomyosin ATPase activity. The chain is Troponin I, cardiac muscle (TNNI3) from Bos taurus (Bovine).